Here is a 1228-residue protein sequence, read N- to C-terminus: Membrane-anchored lipid-binding protein LAM1 (1228 aa).

Residues 1-1062 (MHEHKAELRL…IFKCFSKVNK (1062 aa)) are Cytoplasmic-facing. Residues 308-421 (EKGLSGWLYM…WINTLTSHKR (114 aa)) enclose the PH domain. The region spanning 773–978 (EAWCYFQDNF…KTREYLKKFN (206 aa)) is the VASt domain. Residues 1063–1083 (TLYYCLLISAVTNLFFVGKSI) traverse the membrane as a helical segment. Topologically, residues 1084-1228 (HSYFSVKSAE…EYNRLSAIPV (145 aa)) are lumenal. N1205 carries N-linked (GlcNAc...) asparagine glycosylation.

This sequence belongs to the SIP3 family.

Its subcellular location is the mitochondrion membrane. It is found in the endoplasmic reticulum membrane. Functionally, involved in mitochondrial fragmentation during programmed cell death in response to high levels of alpha-factor mating pheromone or the drug amiodarone. May be involved in sterol transfer between intracellular membranes. This chain is Membrane-anchored lipid-binding protein LAM1, found in Saccharomyces cerevisiae (strain ATCC 204508 / S288c) (Baker's yeast).